The following is a 390-amino-acid chain: GTPase Obg (390 aa).

One can recognise an Obg domain in the interval 1 to 159 (MKFVDEASIL…RELLLELMLL (159 aa)). The segment at 127–147 (NTRFKSSVNRTPRQKTNGTPG) is disordered. Residues 129 to 145 (RFKSSVNRTPRQKTNGT) show a composition bias toward polar residues. An OBG-type G domain is found at 160–333 (ADVGMLGMPN…LCWDVMTFII (174 aa)). Residues 166 to 173 (GMPNAGKS), 191 to 195 (FTTLV), 213 to 216 (DIPG), 283 to 286 (NKID), and 314 to 316 (SAA) each bind GTP. Mg(2+) contacts are provided by Ser-173 and Thr-193.

It belongs to the TRAFAC class OBG-HflX-like GTPase superfamily. OBG GTPase family. As to quaternary structure, monomer. Mg(2+) is required as a cofactor.

It is found in the cytoplasm. Functionally, an essential GTPase which binds GTP, GDP and possibly (p)ppGpp with moderate affinity, with high nucleotide exchange rates and a fairly low GTP hydrolysis rate. Plays a role in control of the cell cycle, stress response, ribosome biogenesis and in those bacteria that undergo differentiation, in morphogenesis control. The sequence is that of GTPase Obg from Escherichia coli O7:K1 (strain IAI39 / ExPEC).